The sequence spans 206 residues: Small ribosomal subunit protein uS4 (206 aa).

Residues 96–158 (GRLDNVVYRM…AKKQSRIKAA (63 aa)) form the S4 RNA-binding domain.

Belongs to the universal ribosomal protein uS4 family. Part of the 30S ribosomal subunit. Contacts protein S5. The interaction surface between S4 and S5 is involved in control of translational fidelity.

Functionally, one of the primary rRNA binding proteins, it binds directly to 16S rRNA where it nucleates assembly of the body of the 30S subunit. Its function is as follows. With S5 and S12 plays an important role in translational accuracy. This Vibrio cholerae serotype O1 (strain ATCC 39541 / Classical Ogawa 395 / O395) protein is Small ribosomal subunit protein uS4.